The sequence spans 923 residues: Mitochondrial 10-formyltetrahydrofolate dehydrogenase (923 aa).

Residues 1 to 19 constitute a mitochondrion; not cleaved transit peptide; sequence MLWRGSQALRHFSTSRVYF. Residues 23–331 are hydrolase domain; it reads LKLALIGQSL…PASQYFSAGE (309 aa). Serine 31 is modified (phosphoserine). Lysine 60 bears the N6-succinyllysine mark. Residue 110 to 112 participates in (6R)-10-formyltetrahydrofolate binding; that stretch reads QFI. The active-site Proton donor is the histidine 128. Residue aspartate 164 participates in (6R)-10-formyltetrahydrofolate binding. The Carrier domain maps to 339-416; sequence AEELKVAETI…DFIQKVVRRL (78 aa). Serine 375 bears the O-(pantetheine 4'-phosphoryl)serine mark. Residues 438–923 form an aldehyde dehydrogenase domain region; that stretch reads TVKIPYQCFI…LKIKTVTLEY (486 aa). NADP(+) is bound by residues 592–594 and 618–621; these read IPW and KPAQ. Position 650 is a phosphoserine (serine 650). Residues 651–656 and 671–672 each bind NADP(+); these read GGVAGQ and GS. An N6-succinyllysine modification is found at lysine 681. Glutamate 694 functions as the Proton acceptor in the catalytic mechanism. 694 to 695 is an NADP(+) binding site; the sequence is EL. Cysteine 728 serves as the catalytic Proton donor. Residues lysine 778 and 825–827 contribute to the NADP(+) site; that span reads ESF. At lysine 903 the chain carries N6-acetyllysine.

The protein in the N-terminal section; belongs to the GART family. It in the C-terminal section; belongs to the aldehyde dehydrogenase family. ALDH1L subfamily. Post-translationally, phosphopantetheinylation at Ser-375 by AASDHPPT is required for the formyltetrahydrofolate dehydrogenase activity.

The protein localises to the mitochondrion. It catalyses the reaction (6R)-10-formyltetrahydrofolate + NADP(+) + H2O = (6S)-5,6,7,8-tetrahydrofolate + CO2 + NADPH + H(+). Mitochondrial 10-formyltetrahydrofolate dehydrogenase that catalyzes the NADP(+)-dependent conversion of 10-formyltetrahydrofolate to tetrahydrofolate and carbon dioxide. In Mus musculus (Mouse), this protein is Mitochondrial 10-formyltetrahydrofolate dehydrogenase.